The following is a 65-amino-acid chain: Small ribosomal subunit protein bS21 (65 aa).

A disordered region spans residues 43-65; it reads VDDRLKRARSKRRAQRANEESNA. Residues 48–57 are compositionally biased toward basic residues; the sequence is KRARSKRRAQ.

It belongs to the bacterial ribosomal protein bS21 family.

In Chloroherpeton thalassium (strain ATCC 35110 / GB-78), this protein is Small ribosomal subunit protein bS21.